The following is a 115-amino-acid chain: Small polypeptide DEVIL 13 (115 aa).

Positions 1 to 12 are enriched in basic and acidic residues; it reads MEEKWKLSKKDT. The disordered stretch occupies residues 1–89; it reads MEEKWKLSKK…SITQKYSSLA (89 aa). Residues 13 to 65 are compositionally biased toward low complexity; sequence TASSSSSKSKFSRSFSTSASSTKSPIFVRSSSTKCSVPSSSSSSSSSSSISRS. A helical transmembrane segment spans residues 44 to 63; it reads STKCSVPSSSSSSSSSSSIS. A required for DVL/RTFL small polypeptide activity region spans residues 80 to 111; the sequence is SITQKYSSLAKEQKARFYIMRRCVAMLVCWHK.

It belongs to the DVL/RTFL small polypeptides family.

It is found in the cell membrane. Small polypeptide acting as a regulatory molecule which coordinates cellular responses required for differentiation, growth and development, probably by restricting polar cell proliferation in lateral organs and coordinating socket cell recruitment and differentiation at trichome sites. This Arabidopsis thaliana (Mouse-ear cress) protein is Small polypeptide DEVIL 13.